A 2539-amino-acid chain; its full sequence is Zinc finger FYVE domain-containing protein 26 (2539 aa).

4 positions are modified to phosphoserine: serine 297, serine 615, serine 619, and serine 703. Disordered regions lie at residues 594-637 (HLPE…SLGV), 699-724 (ISSRSPPEKPKQESQSCSGSRDGLQS), and 738-806 (WRHK…SLSA). Residues 764 to 774 (PSLRRGRRTRR) are compositionally biased toward basic residues. The segment covering 787 to 805 (SLESTSSELSTSTSEGSLS) has biased composition (low complexity). At serine 800 the chain carries Phosphoserine. Positions 868–895 (MFMERYQEVIQELAQVEHKIENQNSDAG) form a coiled coil. The segment at 1267–1296 (DLPLSTPSSPRTTENPTLERKPYSSPRDSS) is disordered. Over residues 1271–1282 (STPSSPRTTENP) the composition is skewed to polar residues. Phosphoserine occurs at positions 1742, 1764, 1780, and 1782. Residues 1754-1808 (ADPETLPRSPSAEFSPAAPPGISSIHSPSLRERSFPPTQPSQEFVPPATPPARHQ) form a disordered region. The segment covering 1760 to 1769 (PRSPSAEFSP) has biased composition (low complexity). The segment at 1812–1872 (DETESICMVC…VCDQCYSYCN (61 aa)) adopts an FYVE-type zinc-finger fold. Zn(2+) is bound by residues cysteine 1818, cysteine 1821, cysteine 1835, cysteine 1838, cysteine 1843, cysteine 1846, cysteine 1864, and cysteine 1867.

Interacts with AP5Z1, AP5B1, AP5S1 and SPG11. Interacts with TTC19 and KIF13A. As to expression, strongest expression in the adrenal gland, bone marrow, adult brain, fetal brain, lung, placenta, prostate, skeletal muscle, testis, thymus, and retina. Intermediate levels are detected in other structures, including the spinal cord.

Its subcellular location is the cytoplasm. The protein localises to the cytoskeleton. It localises to the microtubule organizing center. It is found in the centrosome. The protein resides in the midbody. In terms of biological role, phosphatidylinositol 3-phosphate-binding protein required for the abscission step in cytokinesis: recruited to the midbody during cytokinesis and acts as a regulator of abscission. May also be required for efficient homologous recombination DNA double-strand break repair. The polypeptide is Zinc finger FYVE domain-containing protein 26 (ZFYVE26) (Homo sapiens (Human)).